Reading from the N-terminus, the 52-residue chain is LDPKCTLPLETGICRAELHRFGYDTKLKECTQFVYGGCHHNENNFKKLEVCR.

Residues 5–52 form the BPTI/Kunitz inhibitor domain; it reads CTLPLETGICRAELHRFGYDTKLKECTQFVYGGCHHNENNFKKLEVCR. Cystine bridges form between C14-C38 and C30-C51.

In terms of biological role, inhibits trypsin and the toxin protease PR2 of M.anisopliae. Does not inhibit chymotrypsin, subtilisin Carlsberg, proteinase K, porcine pancreatic elastase and the toxin protease PR1 of M.anisopliae. This chain is Inducible serine protease inhibitor 2, found in Galleria mellonella (Greater wax moth).